The following is a 717-amino-acid chain: Polyribonucleotide nucleotidyltransferase (717 aa).

Mg(2+) is bound by residues D486 and D492. Positions 553–612 (PRMITVKINPEKIRDVIGKGGSTIQALTKETGCTIDIQEDGTITIASTSSEGMAEAKRRI) constitute a KH domain. The S1 motif domain occupies 622-690 (GKIYSGTVLK…EKGRMRLSIK (69 aa)). Residues 690-717 (KAAKAEEGDVPATAPQAPGAGDATSQQQ) form a disordered region.

It belongs to the polyribonucleotide nucleotidyltransferase family. Mg(2+) serves as cofactor.

It localises to the cytoplasm. It carries out the reaction RNA(n+1) + phosphate = RNA(n) + a ribonucleoside 5'-diphosphate. Functionally, involved in mRNA degradation. Catalyzes the phosphorolysis of single-stranded polyribonucleotides processively in the 3'- to 5'-direction. The protein is Polyribonucleotide nucleotidyltransferase of Ralstonia nicotianae (strain ATCC BAA-1114 / GMI1000) (Ralstonia solanacearum).